A 211-amino-acid polypeptide reads, in one-letter code: Probable nicotinate-nucleotide adenylyltransferase (211 aa).

Belongs to the NadD family.

The enzyme catalyses nicotinate beta-D-ribonucleotide + ATP + H(+) = deamido-NAD(+) + diphosphate. Its pathway is cofactor biosynthesis; NAD(+) biosynthesis; deamido-NAD(+) from nicotinate D-ribonucleotide: step 1/1. Catalyzes the reversible adenylation of nicotinate mononucleotide (NaMN) to nicotinic acid adenine dinucleotide (NaAD). This Legionella pneumophila (strain Corby) protein is Probable nicotinate-nucleotide adenylyltransferase.